The primary structure comprises 315 residues: Ankyrin repeat domain-containing protein 54 (315 aa).

Positions 1–49 are disordered; the sequence is MDGSSPLLAAAGSDGDRSSSEGEYTLAGGPSAGDTEKREGESPMEAAGA. ANK repeat units lie at residues 124 to 153, 157 to 186, 190 to 219, and 223 to 255; these read HAVKRLREAANSNDIDTVRRLLEDDTDPCA, KGRTALHFSSCNGNETIVQLLLSYGADPNQ, LGNTPLHLAACTNHVPVITTLLRGGARVDA, and AGRTPLHLARSKLNILQEGDSRSLETLRGEVTQ.

The protein resides in the nucleus. It is found in the cytoplasm. It localises to the midbody. Plays an important role in regulating intracellular signaling events associated with erythroid terminal differentiation. This chain is Ankyrin repeat domain-containing protein 54 (ankrd54), found in Danio rerio (Zebrafish).